The sequence spans 203 residues: Small ribosomal subunit protein uS4 (203 aa).

Residues 93–156 enclose the S4 RNA-binding domain; sequence QRLDNVVYRL…MKVPAILEAV (64 aa).

It belongs to the universal ribosomal protein uS4 family. In terms of assembly, part of the 30S ribosomal subunit. Contacts protein S5. The interaction surface between S4 and S5 is involved in control of translational fidelity.

Its function is as follows. One of the primary rRNA binding proteins, it binds directly to 16S rRNA where it nucleates assembly of the body of the 30S subunit. With S5 and S12 plays an important role in translational accuracy. This Lactococcus lactis subsp. cremoris (strain MG1363) protein is Small ribosomal subunit protein uS4.